A 1040-amino-acid polypeptide reads, in one-letter code: Multidrug resistance protein MdtB (1040 aa).

11 helical membrane passes run 15 to 37 (LFIL…GIIG), 345 to 362 (FELM…YLFL), 367 to 389 (ATII…MVFL), 396 to 418 (LTLM…VIEN), 438 to 460 (GEIG…PLLF), 472 to 494 (FAVT…TPMM), 535 to 557 (HPWL…WITI), 867 to 889 (VWLI…ESFI), 909 to 931 (LIIA…IGIV), 968 to 990 (ILMT…GVGA), and 1000 to 1022 (MVGG…YLLF).

This sequence belongs to the resistance-nodulation-cell division (RND) (TC 2.A.6) family. MdtB subfamily. Part of a tripartite efflux system composed of MdtA, MdtB and MdtC. MdtB forms a heteromultimer with MdtC.

The protein resides in the cell inner membrane. This Salmonella typhi protein is Multidrug resistance protein MdtB.